A 227-amino-acid chain; its full sequence is E3 ubiquitin-protein ligase RNF186 (227 aa).

The segment at 40 to 86 adopts an RING-type zinc-finger fold; sequence CLVCREPYSCPRLPKLLACQHAFCAICLKLLLCVQDNTWSITCPLCR. 2 consecutive transmembrane segments (helical) span residues 158–178 and 180–200; these read HLLL…PGVL and WVLT…CCLP.

In terms of assembly, interacts with BNIP1. Polyubiquitinated. 'Lys-29'-linked autoubiquitination leads to proteasomal degradation.

Its subcellular location is the endoplasmic reticulum membrane. It carries out the reaction S-ubiquitinyl-[E2 ubiquitin-conjugating enzyme]-L-cysteine + [acceptor protein]-L-lysine = [E2 ubiquitin-conjugating enzyme]-L-cysteine + N(6)-ubiquitinyl-[acceptor protein]-L-lysine.. It functions in the pathway protein modification; protein ubiquitination. E3 ubiquitin protein ligase that is part of an apoptotic signaling pathway activated by endoplasmic reticulum stress. Stimulates the expression of proteins specific of the unfolded protein response (UPR), ubiquitinates BNIP1 and regulates its localization to the mitochondrion and induces calcium release from the endoplasmic reticulum that ultimately leads to cell apoptosis. Plays a role in the maintenance of intestinal homeostasis and clearance of enteric pathogens. Upon NOD2 stimulation, ubiquitinates the ER stress sensor activating transcription factor 6/ATF6 and promotes the unfolded protein response UPR. Participates in basal level of autophagy maintenance by regulating the ubiquitination of EPHB2 and EPHB3. Upon stimulation by ligand EFNB1, ubiquitinates EPHB2 and further recruits MAP1LC3B for autophagy induction. Controls nutrient sensing by ubiquitinating Sestrin-2/SESN2, which is an intracellular sensor of cytosolic leucine and inhibitor of mTORC1 activity. This is E3 ubiquitin-protein ligase RNF186 from Homo sapiens (Human).